A 229-amino-acid polypeptide reads, in one-letter code: Cell division protein FtsQ (229 aa).

The chain crosses the membrane as a helical span at residues 1–21 (MIVLLCVIFAFLVYSNWHSWL). Topologically, residues 22–229 (ESLDRNPIRA…AAVGFSPLPK (208 aa)) are periplasmic. One can recognise a POTRA domain in the interval 27–97 (NPIRAYALTH…DRLSITLIEH (71 aa)).

Belongs to the FtsQ/DivIB family. FtsQ subfamily. As to quaternary structure, part of a complex composed of FtsB, FtsL and FtsQ.

The protein localises to the cell inner membrane. In terms of biological role, essential cell division protein. May link together the upstream cell division proteins, which are predominantly cytoplasmic, with the downstream cell division proteins, which are predominantly periplasmic. May control correct divisome assembly. The chain is Cell division protein FtsQ from Actinobacillus pleuropneumoniae serotype 3 (strain JL03).